A 520-amino-acid chain; its full sequence is MASVSAIGVLKVPPASTSNSTGKATEAVPTRTLSFSSSVTSSDDKISLKSTVSRLCKSVVRRNPIIVSPKAVSDSQNSQTCLDPDASSSVLGIILGGGAGTRLYPLTKKRAKPAVPLGANYRLIDIPVSNCLNSNISKIYVLTQFNSASLNRHLSRAYASNMGGYKNEGFVEVLAAQQSPENPNWFQGTADAVRQYLWLFEEHNVLEYLILAGDHLYRMDYEKFIQAHRETDADITVAALPMDEQRATAFGLMKIDEEGRIIEFAEKPKGEHLKAMKVDTTILGLDDQRAKEMPFIASMGIYVVSRDVMLDLLRNQFPGANDFGSEVIPGATSLGLRVQAYLYDGYWEDIGTIEAFYNANLGITKKPVPDFSFYDRSAPIYTQPRYLPPSKMLDADVTDSVIGEGCVIKNCKIHHSVVGLRSCISEGAIIEDSLLMGADYYETATEKSLLSAKGSVPIGIGKNSHIKRAIIDKNARIGDNVKIINSDNVQEAARETDGYFIKSGIVTVIKDALIPTGTVI.

A chloroplast-targeting transit peptide spans 1-71 (MASVSAIGVL…RNPIIVSPKA (71 aa)).

The protein belongs to the bacterial/plant glucose-1-phosphate adenylyltransferase family. As to quaternary structure, heterotetramer. In terms of tissue distribution, leaves.

The protein resides in the plastid. It localises to the chloroplast. It carries out the reaction alpha-D-glucose 1-phosphate + ATP + H(+) = ADP-alpha-D-glucose + diphosphate. It participates in glycan biosynthesis; starch biosynthesis. Activated by 3'phosphoglycerate, inhibited by orthophosphate. Allosteric regulation. In terms of biological role, this protein plays a role in synthesis of starch. It catalyzes the synthesis of the activated glycosyl donor, ADP-glucose from Glc-1-P and ATP. This Arabidopsis thaliana (Mouse-ear cress) protein is Glucose-1-phosphate adenylyltransferase small subunit, chloroplastic (APS1).